The primary structure comprises 117 residues: Ubiquitin-like protein 3 (117 aa).

The region spanning 10–88 (INLRLILVSG…PFGKTTVMHL (79 aa)) is the Ubiquitin-like domain. Residue Cys113 is the site of S-palmitoyl cysteine attachment. Cys114 bears the Cysteine methyl ester mark. Cys114 carries S-geranylgeranyl cysteine lipidation. A propeptide spans 115 to 117 (VIL) (removed in mature form).

The protein localises to the cell membrane. The polypeptide is Ubiquitin-like protein 3 (Ubl3) (Mus musculus (Mouse)).